Reading from the N-terminus, the 1097-residue chain is Chitin synthase 2 (1097 aa).

The disordered stretch occupies residues 1 to 46 (MAGYGHSTAGGFGSGSGSGPPGPQYMLPQYDEGDDPDADATPAGQG). The Extracellular portion of the chain corresponds to 1–748 (MAGYGHSTAG…HVEFLYHLLQ (748 aa)). Over residues 8–19 (TAGGFGSGSGSG) the composition is skewed to gly residues. N-linked (GlcNAc...) asparagine glycosylation is present at Asn55. Disordered regions lie at residues 148-217 (SGHG…YPRY) and 259-322 (SSQI…RPPQ). Residues 284–296 (STTYSSNTGTSAS) are compositionally biased toward polar residues. A compositionally biased stretch (basic and acidic residues) spans 299-313 (DKFEHYGPIPEEGKH). Residues Asn416 and Asn424 are each glycosylated (N-linked (GlcNAc...) asparagine). Residues 749-769 (LLFTYFSLANFYLAFYFIAGG) form a helical membrane-spanning segment. Over 770–786 (LADPHVDPFNSDGHVAR) the chain is Cytoplasmic. The helical transmembrane segment at 787–807 (IIFNILRYVCVLLICTQFILS) threads the bilayer. Residues 808 to 821 (LGNRPQGAKRMYLA) lie on the Extracellular side of the membrane. Residues 822 to 842 (SMIIYAVIMVYTTFATIFIVV) traverse the membrane as a helical segment. Residues 843-865 (RQIQPSQKSDDKPDLELGNNVFT) lie on the Cytoplasmic side of the membrane. Residues 866 to 886 (NLIVSVASTLGLYFVMSFLYL) form a helical membrane-spanning segment. The Extracellular segment spans residues 887-894 (DPWHMFTS). A helical membrane pass occupies residues 895 to 915 (AIQYFVLLPSYICTLQIYAFC). The Cytoplasmic portion of the chain corresponds to 916 to 993 (NTHDVTWGTK…QDYYKSVRTY (78 aa)). The chain crosses the membrane as a helical span at residues 994–1014 (MVVSWMVANATLAMAVSEAYG). Residues 1015–1025 (DSEIGDNFYLR) lie on the Extracellular side of the membrane. Residues 1026 to 1046 (FILWAVAALALFRALGSTTFA) traverse the membrane as a helical segment. Residues 1047-1097 (AINLVSALVEGRVRLRLNMKGFRWIKEKWGDADVKGKFEGLGDRARGLARR) are Cytoplasmic-facing.

Belongs to the chitin synthase family.

It localises to the cell membrane. The catalysed reaction is [(1-&gt;4)-N-acetyl-beta-D-glucosaminyl](n) + UDP-N-acetyl-alpha-D-glucosamine = [(1-&gt;4)-N-acetyl-beta-D-glucosaminyl](n+1) + UDP + H(+). Functionally, polymerizes chitin, a structural polymer of the cell wall and septum, by transferring the sugar moiety of UDP-GlcNAc to the non-reducing end of the growing chitin polymer. The sequence is that of Chitin synthase 2 (chs-2) from Neurospora crassa (strain ATCC 24698 / 74-OR23-1A / CBS 708.71 / DSM 1257 / FGSC 987).